The following is a 563-amino-acid chain: (R)-mandelonitrile lyase 2 (563 aa).

The signal sequence occupies residues 1–27 (MEKSTMSAILLVLYIFVLHLQYSEVHS). Residues 63–64 (TS), 82–83 (ER), V129, T133, and 137–140 (NAGV) each bind FAD. N-linked (GlcNAc...) asparagine glycosylation is found at N145 and N162. FAD is bound at residue V244. C355 provides a ligand contact to substrate. Residues N379 and N419 are each glycosylated (N-linked (GlcNAc...) asparagine). C426 and C477 are oxidised to a cystine. Substrate is bound at residue Y484. FAD is bound by residues 485-486 (WH) and G514. The active-site Proton donor is the H486. The active-site Proton acceptor is the H524. 525–526 (PQ) lines the FAD pocket.

Belongs to the GMC oxidoreductase family. As to quaternary structure, monomer. FAD is required as a cofactor. Glycosylated. Deglycosylation does not affect the enzymatic activity.

The catalysed reaction is (R)-mandelonitrile = benzaldehyde + hydrogen cyanide. Involved in cyanogenesis, the release of HCN from injured tissues. Catalyzes the stereospecific addition of HCN to a variety of aldehydes in vitro. Has no oxidase activity. The redox properties of the FAD cofactor appear to be unimportant for catalysis. The protein is (R)-mandelonitrile lyase 2 (MDL2) of Prunus dulcis (Almond).